A 555-amino-acid polypeptide reads, in one-letter code: Splicing factor U2af large subunit A (555 aa).

The tract at residues 1-165 (MRDYEGNGVD…ISGFDMAPPT (165 aa)) is disordered. 2 stretches are compositionally biased toward basic and acidic residues: residues 23-81 (ISRD…EKDR) and 90-127 (RDRS…DRED). Positions 143-155 (SKSRSRSPSKSKR) are enriched in basic residues. RRM domains lie at 221-304 (RRVY…RPSD), 341-419 (DRIF…RANQ), and 460-546 (EVVT…YPEN).

This sequence belongs to the splicing factor SR family. As to expression, expressed in stems, leaves and apical buds.

The protein localises to the nucleus. Its function is as follows. Necessary for the splicing of pre-mRNA. Binds to the U -enriched regions of plant introns. In Nicotiana plumbaginifolia (Leadwort-leaved tobacco), this protein is Splicing factor U2af large subunit A (U2AF65A).